We begin with the raw amino-acid sequence, 432 residues long: Malate dehydrogenase [NADP], chloroplastic (432 aa).

The N-terminal 40 residues, 1–40, are a transit peptide targeting the chloroplast; the sequence is MGLSTVYSPAGPRLVPAPLGRCRSAQPRRPRRAPLATVRC. The interval 18–37 is disordered; the sequence is PLGRCRSAQPRRPRRAPLAT. A disulfide bond links Cys67 and Cys72. 96–102 contacts NADP(+); it reads GAAGMIS. Substrate contacts are provided by Arg177 and Arg183. Asn190 serves as a coordination point for NADP(+). Gln197 serves as a coordination point for NAD(+). 214 to 216 contacts NADP(+); the sequence is VGN. Positions 216 and 247 each coordinate substrate. His272 serves as the catalytic Proton acceptor. Residues Cys408 and Cys420 are joined by a disulfide bond.

The protein belongs to the LDH/MDH superfamily. MDH type 2 family. Homodimer.

It localises to the plastid. The protein localises to the chloroplast. The catalysed reaction is (S)-malate + NADP(+) = oxaloacetate + NADPH + H(+). With respect to regulation, chloroplast NADP-MDH is activated upon illumination. In order to be enzymatically active, disulfide bridges on the protein must be reduced by thioredoxin which receives electrons from ferredoxin and the electron transport system of photosynthesis. Its function is as follows. The chloroplastic, NADP-dependent form is essential for the photosynthesis C4 cycle, which allows plants to circumvent the problem of photorespiration. In C4 plants, NADP-MDH activity acts to convert oxaloacetate to malate in chloroplasts of mesophyll cells for transport to the bundle sheath cells. This is Malate dehydrogenase [NADP], chloroplastic from Zea mays (Maize).